The sequence spans 165 residues: Lipoprotein signal peptidase (165 aa).

Transmembrane regions (helical) follow at residues 68 to 88 (PLLPWLSFLVCLGLIGLGLFG) and 100 to 120 (GFLLGGAAGNGIDRIFLGEVI). Residues aspartate 121 and aspartate 137 contribute to the active site. The helical transmembrane segment at 130–150 (FPVFNIADISINVGLACLIFA) threads the bilayer.

This sequence belongs to the peptidase A8 family.

Its subcellular location is the cell inner membrane. The enzyme catalyses Release of signal peptides from bacterial membrane prolipoproteins. Hydrolyzes -Xaa-Yaa-Zaa-|-(S,diacylglyceryl)Cys-, in which Xaa is hydrophobic (preferably Leu), and Yaa (Ala or Ser) and Zaa (Gly or Ala) have small, neutral side chains.. The protein operates within protein modification; lipoprotein biosynthesis (signal peptide cleavage). In terms of biological role, this protein specifically catalyzes the removal of signal peptides from prolipoproteins. This is Lipoprotein signal peptidase from Acaryochloris marina (strain MBIC 11017).